The following is a 468-amino-acid chain: MVRGLMKFPGISTKLLNISVNSLCKFRNLERAETLLIDGIRLGVLPDVITYNTLIKGYTRFIGIDEAYAVTRRMREAGIEPDVTTYNSLISGAAKNLMLNRVLQLFDEMLHSGLSPDMWSYNTLMSCYFKLGRHGEAFKILHEDIHLAGLVPGIDTYNILLDALCKSGHTDNAIELFKHLKSRVKPELMTYNILINGLCKSRRVGSVDWMMRELKKSGYTPNAVTYTTMLKMYFKTKRIEKGLQLFLKMKKEGYTFDGFANCAVVSALIKTGRAEEAYECMHELVRSGTRSQDIVSYNTLLNLYFKDGNLDAVDDLLEEIEMKGLKPDDYTHTIIVNGLLNIGNTGGAEKHLACIGEMGMQPSVVTCNCLIDGLCKAGHVDRAMRLFASMEVRDEFTYTSVVHNLCKDGRLVCASKLLLSCYNKGMKIPSSARRAVLSGIRETVSYQAARKTHIKIKAAIECNTLMYP.

PPR repeat units lie at residues 12–46, 47–81, 82–116, 117–152, 153–183, 187–221, 222–256, 257–291, 293–327, 328–362, 363–393, and 394–428; these read STKL…GVLP, DVIT…GIEP, DVTT…GLSP, DMWS…GLVP, GIDT…LKSR, ELMT…GYTP, NAVT…GYTF, DGFA…GTRS, DIVS…GLKP, DDYT…GMQP, SVVT…MEVR, and DEFT…GMKI.

This sequence belongs to the PPR family. P subfamily.

In Arabidopsis thaliana (Mouse-ear cress), this protein is Pentatricopeptide repeat-containing protein At5g46680.